Here is a 120-residue protein sequence, read N- to C-terminus: Large ribosomal subunit protein uL18 (120 aa).

The protein belongs to the universal ribosomal protein uL18 family. As to quaternary structure, part of the 50S ribosomal subunit; part of the 5S rRNA/L5/L18/L25 subcomplex. Contacts the 5S and 23S rRNAs.

This is one of the proteins that bind and probably mediate the attachment of the 5S RNA into the large ribosomal subunit, where it forms part of the central protuberance. This chain is Large ribosomal subunit protein uL18, found in Clostridium botulinum (strain Eklund 17B / Type B).